Here is a 295-residue protein sequence, read N- to C-terminus: Bifunctional protein FolD (295 aa).

NADP(+) contacts are provided by residues 164–166 (GRS), S193, and I234.

The protein belongs to the tetrahydrofolate dehydrogenase/cyclohydrolase family. Homodimer.

It catalyses the reaction (6R)-5,10-methylene-5,6,7,8-tetrahydrofolate + NADP(+) = (6R)-5,10-methenyltetrahydrofolate + NADPH. The enzyme catalyses (6R)-5,10-methenyltetrahydrofolate + H2O = (6R)-10-formyltetrahydrofolate + H(+). The protein operates within one-carbon metabolism; tetrahydrofolate interconversion. In terms of biological role, catalyzes the oxidation of 5,10-methylenetetrahydrofolate to 5,10-methenyltetrahydrofolate and then the hydrolysis of 5,10-methenyltetrahydrofolate to 10-formyltetrahydrofolate. The protein is Bifunctional protein FolD of Flavobacterium johnsoniae (strain ATCC 17061 / DSM 2064 / JCM 8514 / BCRC 14874 / CCUG 350202 / NBRC 14942 / NCIMB 11054 / UW101) (Cytophaga johnsonae).